The chain runs to 225 residues: UPF0173 metal-dependent hydrolase PAE2160 (225 aa).

This sequence belongs to the UPF0173 family.

The protein is UPF0173 metal-dependent hydrolase PAE2160 of Pyrobaculum aerophilum (strain ATCC 51768 / DSM 7523 / JCM 9630 / CIP 104966 / NBRC 100827 / IM2).